A 1793-amino-acid chain; its full sequence is uncharacterized protein (1793 aa).

Disordered stretches follow at residues 156-189 (ARQA…ASSQ), 204-362 (QRES…PPKV), and 407-505 (ASFG…SGAA). A compositionally biased stretch (polar residues) spans 166 to 175 (SSAQDSQELK). Positions 227–237 (SPKEKAQDEPS) are enriched in basic and acidic residues. Polar residues predominate over residues 238 to 247 (SKTPSPQNNP). Residues 248–258 (ASSQLSRSQHS) are compositionally biased toward low complexity. Basic and acidic residues predominate over residues 277–288 (KAEEDGLSKMED). Residues 289–307 (STTSTGALATSSSSLGFES) show a composition bias toward low complexity. The span at 317 to 342 (AVGGEGEKISGGGGGGKGGGGGGAGD) shows a compositional bias: gly residues. Low complexity predominate over residues 434–450 (STTPSTNTTRTPSPTSS). The span at 463 to 476 (DTSSTEVGSGPSDS) shows a compositional bias: polar residues. Positions 485 to 505 (PGTAPLTEPLPETPEAASGAA) are enriched in low complexity. The residue at position 733 (T733) is a Phosphothreonine. 7 disordered regions span residues 757-809 (RSES…SKFA), 829-917 (MERG…FTDG), 1090-1147 (RDIR…GSGS), 1161-1187 (QRED…NSSS), 1229-1249 (QKTP…ATKP), 1408-1465 (TGGV…KSNS), and 1482-1567 (GELL…PLPF). Basic and acidic residues-rich tracts occupy residues 829-839 (MERGEVMDTSH) and 846-872 (KETE…HSEA). Positions 1113-1123 (KGSGDSSDKGS) are enriched in low complexity. The span at 1161-1174 (QREDSMDREPRESM) shows a compositional bias: basic and acidic residues. The residue at position 1187 (S1187) is a Phosphoserine. Over residues 1231–1246 (TPEKLKEEEVKEEGKA) the composition is skewed to basic and acidic residues. Low complexity predominate over residues 1513-1528 (SQVPSSSKGSQVSGTS). Over residues 1546–1555 (PPGPQSPEHP) the composition is skewed to pro residues. R1774 bears the Omega-N-methylarginine mark.

As to expression, expressed in muscle, heart, kidney and liver but barely detectable in lung, pancreas and brain. In liver veins, expressed in hepatic vein, extrahepatic portal vein and intrahepatic portal vein.

This is an uncharacterized protein from Homo sapiens (Human).